We begin with the raw amino-acid sequence, 365 residues long: Methylthioribose-1-phosphate isomerase (365 aa).

The Proton donor role is filled by aspartate 255.

It belongs to the eIF-2B alpha/beta/delta subunits family. MtnA subfamily.

Its subcellular location is the cytoplasm. The protein resides in the nucleus. The enzyme catalyses 5-(methylsulfanyl)-alpha-D-ribose 1-phosphate = 5-(methylsulfanyl)-D-ribulose 1-phosphate. Its pathway is amino-acid biosynthesis; L-methionine biosynthesis via salvage pathway; L-methionine from S-methyl-5-thio-alpha-D-ribose 1-phosphate: step 1/6. Its function is as follows. Catalyzes the interconversion of methylthioribose-1-phosphate (MTR-1-P) into methylthioribulose-1-phosphate (MTRu-1-P). This Drosophila willistoni (Fruit fly) protein is Methylthioribose-1-phosphate isomerase.